The sequence spans 305 residues: MSRLQVAAFYAFTPLNEQQRASLLSDLPDMAMTNSVLGSILVAHEGVNGTISGPEAGVEALLQSLRTSLALGCEHFERLEVKRSWADQAVFRRFKARAKKEIVTMGVTSVNPRQNVGTYVDPKDWNDLVDDPDTLVIDTRNSYETAIGSFEGSLDPSTESFRDFPAWAEASLRPLMNDQSPKRIAMFCTGGIRCEKASSYLQSNGFGEVLHLRGGILNYLGEIPEQESRWQGECFVFDQRVALNHQLEPGVHSLCHACGLPLSPSDRADPSYIKGVQCIHCIDRFSESDRARFLMRQQQFDQTPT.

The Rhodanese domain maps to aspartate 130 to serine 228. Cysteine 188 (cysteine persulfide intermediate) is an active-site residue.

It belongs to the TrhO family.

The enzyme catalyses uridine(34) in tRNA + AH2 + O2 = 5-hydroxyuridine(34) in tRNA + A + H2O. In terms of biological role, catalyzes oxygen-dependent 5-hydroxyuridine (ho5U) modification at position 34 in tRNAs. The chain is tRNA uridine(34) hydroxylase from Synechococcus sp. (strain CC9902).